Consider the following 107-residue polypeptide: uncharacterized protein (107 aa).

2 disordered regions span residues 51 to 75 (VQRSRLRRKGPINGNQGSAIPTQSA) and 88 to 107 (NPTPRGLSRLAASVPTAPEP). Positions 63 to 75 (NGNQGSAIPTQSA) are enriched in polar residues.

This is an uncharacterized protein from Fowl adenovirus A serotype 1 (strain CELO / Phelps) (FAdV-1).